The primary structure comprises 274 residues: Large ribosomal subunit protein uL2 (274 aa).

The segment at 214 to 274 is disordered; that stretch reads LGRRPRTRPV…NKYIVERRKK (61 aa).

The protein belongs to the universal ribosomal protein uL2 family. Part of the 50S ribosomal subunit. Forms a bridge to the 30S subunit in the 70S ribosome.

Functionally, one of the primary rRNA binding proteins. Required for association of the 30S and 50S subunits to form the 70S ribosome, for tRNA binding and peptide bond formation. It has been suggested to have peptidyltransferase activity; this is somewhat controversial. Makes several contacts with the 16S rRNA in the 70S ribosome. The chain is Large ribosomal subunit protein uL2 from Flavobacterium johnsoniae (strain ATCC 17061 / DSM 2064 / JCM 8514 / BCRC 14874 / CCUG 350202 / NBRC 14942 / NCIMB 11054 / UW101) (Cytophaga johnsonae).